The chain runs to 268 residues: 14-3-3-like protein GF14 upsilon (268 aa).

Phosphoserine occurs at positions 69 and 192. At Thr213 the chain carries Phosphothreonine. The disordered stretch occupies residues 243–268; the sequence is EAGDDIKEAPKEVQKVDEQAQPPPSQ. Positions 246 to 260 are enriched in basic and acidic residues; the sequence is DDIKEAPKEVQKVDE. Phosphoserine is present on Ser267.

Belongs to the 14-3-3 family. In terms of assembly, interacts with EDE1. Interacts with DREB1A and DREB1B in the nucleus. Interacts with CINV1.

The protein resides in the cytoplasm. It is found in the nucleus. Its function is as follows. Is associated with a DNA binding complex that binds to the G box, a well-characterized cis-acting DNA regulatory element found in plant genes. May be involved in cell cycle regulation by binding to soluble EDE1 and sequestering it in an inactive form during the early stages of mitosis. In Arabidopsis thaliana (Mouse-ear cress), this protein is 14-3-3-like protein GF14 upsilon (GRF5).